We begin with the raw amino-acid sequence, 265 residues long: Energy-coupling factor transporter transmembrane protein EcfT (265 aa).

Helical transmembrane passes span 32 to 52 (MVLL…VFII), 72 to 92 (LVII…GRVI), 115 to 135 (LIML…IALT), 150 to 170 (VPAH…PTLM), and 245 to 265 (LAAF…RFIW).

The protein belongs to the energy-coupling factor EcfT family. Forms a stable energy-coupling factor (ECF) transporter complex composed of 2 membrane-embedded substrate-binding proteins (S component), 2 ATP-binding proteins (A component) and 2 transmembrane proteins (T component). May be able to interact with more than 1 S component at a time.

It localises to the cell membrane. Functionally, transmembrane (T) component of an energy-coupling factor (ECF) ABC-transporter complex. Unlike classic ABC transporters this ECF transporter provides the energy necessary to transport a number of different substrates. This is Energy-coupling factor transporter transmembrane protein EcfT from Thermosediminibacter oceani (strain ATCC BAA-1034 / DSM 16646 / JW/IW-1228P).